The chain runs to 144 residues: Large ribosomal subunit protein uL16 (144 aa).

Belongs to the universal ribosomal protein uL16 family. In terms of assembly, part of the 50S ribosomal subunit.

In terms of biological role, binds 23S rRNA and is also seen to make contacts with the A and possibly P site tRNAs. The chain is Large ribosomal subunit protein uL16 from Bacillus mycoides (strain KBAB4) (Bacillus weihenstephanensis).